We begin with the raw amino-acid sequence, 309 residues long: uncharacterized protein (309 aa).

Residues 1–16 (MAGNSRRRGAVRKAGT) are compositionally biased toward basic residues. The segment at 1-70 (MAGNSRRRGA…AKRTEETETV (70 aa)) is disordered. S-adenosyl-L-methionine contacts are provided by G261, I281, and L290.

This sequence belongs to the class IV-like SAM-binding methyltransferase superfamily. RNA methyltransferase TrmH family.

This is an uncharacterized protein from Mycobacterium avium (strain 104).